We begin with the raw amino-acid sequence, 113 residues long: Large ribosomal subunit protein uL24 (113 aa).

This sequence belongs to the universal ribosomal protein uL24 family. Part of the 50S ribosomal subunit.

Functionally, one of two assembly initiator proteins, it binds directly to the 5'-end of the 23S rRNA, where it nucleates assembly of the 50S subunit. One of the proteins that surrounds the polypeptide exit tunnel on the outside of the subunit. The polypeptide is Large ribosomal subunit protein uL24 (Rickettsia typhi (strain ATCC VR-144 / Wilmington)).